We begin with the raw amino-acid sequence, 76 residues long: UPF0729 protein C18orf32 (76 aa).

The segment at 1–37 (MVCIPCIVIPVLLWIYKKFLEPYIYPLVSPFVSRIWP) is necessary for its localzation to the endoplasmic reticulum and lipid droplets. Residues 46–76 (DTNKGKVNFKGADMNGLPTKGPTEICDKKKD) form a disordered region.

The protein belongs to the UPF0729 family. In terms of assembly, interacts with DERL1 and AMFR. Undergoes ER-associated degradation (ERAD).

It is found in the endoplasmic reticulum. The protein resides in the lipid droplet. Its function is as follows. May activate the NF-kappa-B signaling pathway. This Homo sapiens (Human) protein is UPF0729 protein C18orf32 (C18orf32).